Reading from the N-terminus, the 241-residue chain is Chlorophyll a-b binding protein 6, chloroplastic (241 aa).

The transit peptide at 1–35 (MASNSLMSCGIAAVYPSLLSSSKSKFVSAGVPLPN) directs the protein to the chloroplast. Trp-48 is a chlorophyll b binding site. The chlorophyll a site is built by Phe-68, Glu-87, and His-90. Arg-92 contributes to the chlorophyll b binding site. A helical transmembrane segment spans residues 93–113 (WAMLAVPGILVPEALGYGNWV). Residue Leu-129 participates in chlorophyll a binding. The chain crosses the membrane as a helical span at residues 132–152 (PVPWGTLPTILAIEFLAIAFV). Chlorophyll b-binding residues include Val-133, Glu-153, and Arg-156. Chlorophyll a-binding residues include Lys-190, Glu-191, Asn-194, Arg-196, Gln-208, and His-224. Residues 197–217 (LALLAFVGFCVQQSAYPGTGP) traverse the membrane as a helical segment.

The protein belongs to the light-harvesting chlorophyll a/b-binding (LHC) protein family. The LHC complex consists of chlorophyll a-b binding proteins. Red-emitting heterodimer with LHCA4. Interacts with LHCA5. Binds at least 14 chlorophylls (8 Chl-a and 6 Chl-b) and carotenoids such as lutein and neoxanthin. is required as a cofactor. In terms of processing, photoregulated by reversible phosphorylation of its threonine residues.

Its subcellular location is the plastid. It is found in the chloroplast thylakoid membrane. Its function is as follows. The light-harvesting complex (LHC) functions as a light receptor, it captures and delivers excitation energy to photosystems with which it is closely associated. The chain is Chlorophyll a-b binding protein 6, chloroplastic from Arabidopsis thaliana (Mouse-ear cress).